The primary structure comprises 325 residues: Putative S-adenosyl-L-methionine-dependent methyltransferase MT0917 (325 aa).

S-adenosyl-L-methionine-binding positions include D126 and 155–156; that span reads DL.

Belongs to the UPF0677 family.

Functionally, exhibits S-adenosyl-L-methionine-dependent methyltransferase activity. This chain is Putative S-adenosyl-L-methionine-dependent methyltransferase MT0917, found in Mycobacterium tuberculosis (strain CDC 1551 / Oshkosh).